We begin with the raw amino-acid sequence, 157 residues long: Ribosome-binding factor A (157 aa).

The tract at residues 124-157 is disordered; the sequence is SAGAQFAGDADPYRKPESDDESDTAAKTDGDAAE. Residues 147–157 show a composition bias toward basic and acidic residues; that stretch reads TAAKTDGDAAE.

Belongs to the RbfA family. In terms of assembly, monomer. Binds 30S ribosomal subunits, but not 50S ribosomal subunits or 70S ribosomes.

It localises to the cytoplasm. One of several proteins that assist in the late maturation steps of the functional core of the 30S ribosomal subunit. Associates with free 30S ribosomal subunits (but not with 30S subunits that are part of 70S ribosomes or polysomes). Required for efficient processing of 16S rRNA. May interact with the 5'-terminal helix region of 16S rRNA. The sequence is that of Ribosome-binding factor A from Streptomyces avermitilis (strain ATCC 31267 / DSM 46492 / JCM 5070 / NBRC 14893 / NCIMB 12804 / NRRL 8165 / MA-4680).